The sequence spans 301 residues: ATP synthase gamma chain (301 aa).

This sequence belongs to the ATPase gamma chain family. In terms of assembly, F-type ATPases have 2 components, CF(1) - the catalytic core - and CF(0) - the membrane proton channel. CF(1) has five subunits: alpha(3), beta(3), gamma(1), delta(1), epsilon(1). CF(0) has three main subunits: a, b and c.

It localises to the cell inner membrane. Functionally, produces ATP from ADP in the presence of a proton gradient across the membrane. The gamma chain is believed to be important in regulating ATPase activity and the flow of protons through the CF(0) complex. This is ATP synthase gamma chain from Helicobacter pylori (strain ATCC 700392 / 26695) (Campylobacter pylori).